The chain runs to 296 residues: Protoheme IX farnesyltransferase 2 (296 aa).

9 helical membrane-spanning segments follow: residues 7-27 (LLVA…GGYF), 36-56 (PMLL…GCVL), 83-103 (LKAA…LLWW), 108-128 (LTTA…SLWF), 134-154 (YGTL…YCAV), 163-183 (ASLL…IAIF), 207-227 (IHIV…CLGG), 229-249 (AGYG…AIAL), and 265-285 (FAFS…DFQV).

It belongs to the UbiA prenyltransferase family. Protoheme IX farnesyltransferase subfamily.

It is found in the cell inner membrane. It carries out the reaction heme b + (2E,6E)-farnesyl diphosphate + H2O = Fe(II)-heme o + diphosphate. Its pathway is porphyrin-containing compound metabolism; heme O biosynthesis; heme O from protoheme: step 1/1. Converts heme B (protoheme IX) to heme O by substitution of the vinyl group on carbon 2 of heme B porphyrin ring with a hydroxyethyl farnesyl side group. In Pseudomonas paraeruginosa (strain DSM 24068 / PA7) (Pseudomonas aeruginosa (strain PA7)), this protein is Protoheme IX farnesyltransferase 2.